A 148-amino-acid polypeptide reads, in one-letter code: uncharacterized protein (148 aa).

This is an uncharacterized protein from Methanocaldococcus jannaschii (strain ATCC 43067 / DSM 2661 / JAL-1 / JCM 10045 / NBRC 100440) (Methanococcus jannaschii).